Consider the following 251-residue polypeptide: Protein FAM216A (251 aa).

The disordered stretch occupies residues 1 to 41 (MPSRWPGVAGPPALARTEGGEGSAGHSYPQNSKGTGEQHKA).

Belongs to the FAM216 family.

This Mus musculus (Mouse) protein is Protein FAM216A (Fam216a).